The following is a 658-amino-acid chain: MSDVRVTVQRGQQAEERVVRTGTTAAELFDGERSVIAARVGGLQRDLSHPLAAGDVVEPITVDSPDGRAIVRHSCAHVVAQAVQDLFPKARLGIGPPIQDGFYYDFDVERPFTPEDLKAVEKRAQEIIKAGQRFARRVVSEDEARAELADEPYKIELIGLKSSAGDDAEAGVEVGEGELTIYDNLDPKSGELCWKDLCRGPHVPTTRHIPAFAVQRSAAAYWRGSERNPQLQRIYGTAWESRDALKAYQHRLAEAEKRDHRRLGAELDLFSFPTEIGPGLAVFHPKGGAIRTVMEDYSRRRHIEAGYEFVNTPHITKSDLYEISGHLDWFADGMYPPMQLDGGADYYLKPMNCPMHILIFRSRGRSYRELPLRLFEFGTVYRYEKSGVVHGLTRVRGLTQDDAHLFCAREQLPTELDTVLKFVLGLLRDYGLEDFYLELSTRPPGKAIGSDKEWEEATELLREAASKQDLELVMDEGGGAFYGPKISVQARDAIGRTWQLSTIQVDFQLPQRFDMTYQAADGTRQRPFMIHRALFGTIERFFAILLEHYAGALPPWLAPVQVVGIPITDEHVPYLTDVAAKLRQRGIRVEVDSSDDRMQKKIRTAQKQKVPFMLLAGDEDVAKGAVSFRFRDGTQRNGVPVDEAVAEILDAVERRIQV.

In terms of domain architecture, TGS spans 1-61 (MSDVRVTVQR…AAGDVVEPIT (61 aa)). Residues 259–554 (DHRRLGAELD…LLEHYAGALP (296 aa)) form a catalytic region. Zn(2+) contacts are provided by cysteine 353, histidine 404, and histidine 531.

This sequence belongs to the class-II aminoacyl-tRNA synthetase family. In terms of assembly, homodimer. It depends on Zn(2+) as a cofactor.

The protein resides in the cytoplasm. The catalysed reaction is tRNA(Thr) + L-threonine + ATP = L-threonyl-tRNA(Thr) + AMP + diphosphate + H(+). Functionally, catalyzes the attachment of threonine to tRNA(Thr) in a two-step reaction: L-threonine is first activated by ATP to form Thr-AMP and then transferred to the acceptor end of tRNA(Thr). Also edits incorrectly charged L-seryl-tRNA(Thr). The chain is Threonine--tRNA ligase from Parafrankia sp. (strain EAN1pec).